A 409-amino-acid chain; its full sequence is DNA primase small subunit (409 aa).

Active-site residues include glutamate 46, aspartate 111, and aspartate 113. Residues 123–133 (CCSGAQVCSKC) carry the Zinc knuckle motif motif.

Belongs to the eukaryotic-type primase small subunit family. As to quaternary structure, DNA polymerase alpha:primase is a four subunit enzyme complex, which is assembled throughout the cell cycle, and consists of the two DNA polymerase subunits A POL1 and B POL12, and the DNA primase large PRI2 and small PRI1 subunits.

In terms of biological role, DNA primase is the polymerase that synthesizes small RNA primers for the Okazaki fragments made during discontinuous DNA replication. In a complex with DNA polymerase alpha (DNA polymerase alpha:primase) constitutes a replicative polymerase. Both primase components participate in formation of the active center, but the ATP-binding site is exclusively located on p48. This is DNA primase small subunit (PRI1) from Saccharomyces cerevisiae (strain ATCC 204508 / S288c) (Baker's yeast).